Here is a 360-residue protein sequence, read N- to C-terminus: Ribosomal RNA large subunit methyltransferase F (360 aa).

Positions 1–36 are disordered; sequence MSKLISKQGKRPALSQSGLAKPSTSKKSSASKNANT. Low complexity predominate over residues 23 to 36; that stretch reads STSKKSSASKNANT.

Belongs to the methyltransferase superfamily. METTL16/RlmF family.

Its subcellular location is the cytoplasm. The enzyme catalyses adenosine(1618) in 23S rRNA + S-adenosyl-L-methionine = N(6)-methyladenosine(1618) in 23S rRNA + S-adenosyl-L-homocysteine + H(+). In terms of biological role, specifically methylates the adenine in position 1618 of 23S rRNA. In Shewanella denitrificans (strain OS217 / ATCC BAA-1090 / DSM 15013), this protein is Ribosomal RNA large subunit methyltransferase F.